A 414-amino-acid polypeptide reads, in one-letter code: Alanine--glyoxylate aminotransferase (414 aa).

The N-terminal 23 residues, Met-1 to Met-23, are a transit peptide targeting the mitochondrion. Lys-231 carries the post-translational modification N6-(pyridoxal phosphate)lysine. Residues Lys-256 and Lys-334 each carry the N6-acetyllysine modification. Arg-382 contributes to the substrate binding site.

This sequence belongs to the class-V pyridoxal-phosphate-dependent aminotransferase family. As to quaternary structure, homodimer. Pyridoxal 5'-phosphate serves as cofactor.

Its subcellular location is the peroxisome. The protein resides in the mitochondrion matrix. The catalysed reaction is L-serine + pyruvate = 3-hydroxypyruvate + L-alanine. The enzyme catalyses glyoxylate + L-alanine = glycine + pyruvate. In terms of biological role, catalyzes the transamination of glyoxylate to glycine and contributes to the glyoxylate detoxification. Catalyzes the transamination between L-serine and pyruvate and weakly contributes to gluconeogenesis from the L-serine metabolism. This Callithrix jacchus (White-tufted-ear marmoset) protein is Alanine--glyoxylate aminotransferase.